The following is a 514-amino-acid chain: Nucleus accumbens-associated protein 1 (514 aa).

One can recognise a BTB domain in the interval 30–94 (CDVSVVVKGH…CYTGRLSMNM (65 aa)). Residue Lys167 forms a Glycyl lysine isopeptide (Lys-Gly) (interchain with G-Cter in SUMO1); alternate linkage. A Glycyl lysine isopeptide (Lys-Gly) (interchain with G-Cter in SUMO2); alternate cross-link involves residue Lys167. Lys182 is covalently cross-linked (Glycyl lysine isopeptide (Lys-Gly) (interchain with G-Cter in SUMO2)). Disordered regions lie at residues 183–205 (RLWD…RKMA) and 242–279 (PSMS…EEGT). Residue Ser187 is modified to Phosphoserine. The span at 242–251 (PSMSERTSPG) shows a compositional bias: polar residues. Phosphoserine; by PKC is present on Ser245. Over residues 252–264 (TSSAYTSDSPSSY) the composition is skewed to low complexity. Over residues 267 to 279 (EEDEEEDAGEEGT) the composition is skewed to acidic residues. Residues Lys304, Lys438, Lys466, and Lys485 each participate in a glycyl lysine isopeptide (Lys-Gly) (interchain with G-Cter in SUMO2) cross-link. The region spanning 360–457 (GTNVYITRAQ…DMCTNARRVV (98 aa)) is the BEN domain. Phosphoserine occurs at positions 492 and 496.

In terms of assembly, homooligomer; mediated by the BTB domain. Interacts with HDAC3 and HDAC4. Interacts (via BTB domain) with CUL3, PSMD7 and RCOR1. Ubiquitously expressed with higher expression in the brain, kidney and liver, and at lower levels in heart, lung and testes.

The protein resides in the nucleus. It localises to the cytoplasm. Functions as a transcriptional repressor. Seems to function as a transcriptional corepressor in neuronal cells through recruitment of HDAC3 and HDAC4. Contributes to tumor progression, and tumor cell proliferation and survival. This may be mediated at least in part through repressing transcriptional activity of GADD45GIP1. Required for recruiting the proteasome from the nucleus to the cytoplasm and dendritic spines. Involved in the acute behavioral and neurological responses to cocaine and amphetamines. The protein is Nucleus accumbens-associated protein 1 (Nacc1) of Mus musculus (Mouse).